Reading from the N-terminus, the 175-residue chain is GTP-dependent dephospho-CoA kinase (175 aa).

Asp48, Val49, Val50, Asp66, and Glu124 together coordinate GTP.

It belongs to the GTP-dependent DPCK family.

The enzyme catalyses 3'-dephospho-CoA + GTP = GDP + CoA + H(+). It participates in cofactor biosynthesis; coenzyme A biosynthesis. Its function is as follows. Catalyzes the GTP-dependent phosphorylation of the 3'-hydroxyl group of dephosphocoenzyme A to form coenzyme A (CoA). The protein is GTP-dependent dephospho-CoA kinase of Thermofilum pendens (strain DSM 2475 / Hrk 5).